We begin with the raw amino-acid sequence, 58 residues long: Large ribosomal subunit protein uL30 (58 aa).

This sequence belongs to the universal ribosomal protein uL30 family. As to quaternary structure, part of the 50S ribosomal subunit.

The sequence is that of Large ribosomal subunit protein uL30 from Azotobacter vinelandii (strain DJ / ATCC BAA-1303).